The sequence spans 158 residues: Transcription elongation factor GreA (158 aa).

This sequence belongs to the GreA/GreB family.

Functionally, necessary for efficient RNA polymerase transcription elongation past template-encoded arresting sites. The arresting sites in DNA have the property of trapping a certain fraction of elongating RNA polymerases that pass through, resulting in locked ternary complexes. Cleavage of the nascent transcript by cleavage factors such as GreA or GreB allows the resumption of elongation from the new 3'terminus. GreA releases sequences of 2 to 3 nucleotides. This Agrobacterium fabrum (strain C58 / ATCC 33970) (Agrobacterium tumefaciens (strain C58)) protein is Transcription elongation factor GreA.